The primary structure comprises 258 residues: Type III pantothenate kinase (258 aa).

6 to 13 (DVGNTNTV) contributes to the ATP binding site. Substrate is bound by residues tyrosine 100 and 107–110 (GADR). Aspartate 109 serves as the catalytic Proton acceptor. Aspartate 129 contacts K(+). Threonine 132 contributes to the ATP binding site. A substrate-binding site is contributed by threonine 184.

The protein belongs to the type III pantothenate kinase family. Homodimer. The cofactor is NH4(+). Requires K(+) as cofactor.

Its subcellular location is the cytoplasm. It catalyses the reaction (R)-pantothenate + ATP = (R)-4'-phosphopantothenate + ADP + H(+). It participates in cofactor biosynthesis; coenzyme A biosynthesis; CoA from (R)-pantothenate: step 1/5. With respect to regulation, not regulated by feedback inhibition by CoA and its thioesters as described for many other pantothenate kinases. Not inhibited by N-pentylpantothenamide (N5-Pan), and this compound cannot act as a substrate either. In terms of biological role, catalyzes the phosphorylation of pantothenate (Pan), the first step in CoA biosynthesis. Cannot utilize a phosphoryl donor other than ATP. The chain is Type III pantothenate kinase (coaX) from Bacillus subtilis (strain 168).